The chain runs to 191 residues: General negative regulator of transcription subunit 2 (191 aa).

The protein belongs to the CNOT2/3/5 family. In terms of assembly, forms a NOT protein complex that comprises NOT1, NOT2, NOT3, NOT4 and NOT5. Subunit of the 1.0 MDa CCR4-NOT core complex that contains CCR4, CAF1, NOT1, NOT2, NOT3, NOT4, NOT5, CAF40 and CAF130. In the complex interacts with NOT1 and NOT5. The core complex probably is part of a less characterized 1.9 MDa CCR4-NOT complex.

The protein resides in the cytoplasm. It is found in the nucleus. In terms of biological role, acts as a component of the CCR4-NOT core complex, which in the nucleus seems to be a general transcription factor, and in the cytoplasm the major mRNA deadenylase involved in mRNA turnover. NOT2 is required for the integrity of the complex. The NOT protein subcomplex negatively regulates the basal and activated transcription of many genes. Preferentially affects TC-type TATA element-dependent transcription. Could directly or indirectly inhibit component(s) of the general transcription machinery. This is General negative regulator of transcription subunit 2 (CDC36) from Saccharomyces cerevisiae (strain ATCC 204508 / S288c) (Baker's yeast).